The chain runs to 511 residues: V-type proton ATPase subunit B, brain isoform (511 aa).

Arg400 serves as a coordination point for ATP.

It belongs to the ATPase alpha/beta chains family. In terms of assembly, V-ATPase is a heteromultimeric enzyme made up of two complexes: the ATP-hydrolytic V1 complex and the proton translocation V0 complex. The V1 complex consists of three catalytic AB heterodimers that form a heterohexamer, three peripheral stalks each consisting of EG heterodimers, one central rotor including subunits D and F, and the regulatory subunits C and H. The proton translocation complex V0 consists of the proton transport subunit a, a ring of proteolipid subunits c9c'', rotary subunit d, subunits e and f, and the accessory subunits ATP6AP1/Ac45 and ATP6AP2/PRR. As to expression, kidney; localizes to early distal nephron, encompassing thick ascending limbs and distal convoluted tubules (at protein level).

The protein localises to the apical cell membrane. Its subcellular location is the melanosome. It is found in the cytoplasm. The protein resides in the cytoplasmic vesicle. It localises to the secretory vesicle. The protein localises to the synaptic vesicle membrane. Its subcellular location is the clathrin-coated vesicle membrane. Non-catalytic subunit of the V1 complex of vacuolar(H+)-ATPase (V-ATPase), a multisubunit enzyme composed of a peripheral complex (V1) that hydrolyzes ATP and a membrane integral complex (V0) that translocates protons. V-ATPase is responsible for acidifying and maintaining the pH of intracellular compartments and in some cell types, is targeted to the plasma membrane, where it is responsible for acidifying the extracellular environment. In renal intercalated cells, can partially compensate the lack of ATP6V1B1 and mediate secretion of protons (H+) into the urine under base-line conditions but not in conditions of acid load. The protein is V-type proton ATPase subunit B, brain isoform (ATP6V1B2) of Homo sapiens (Human).